The chain runs to 97 residues: Small ribosomal subunit protein bS16c (97 aa).

This sequence belongs to the bacterial ribosomal protein bS16 family.

The protein resides in the plastid. It is found in the chloroplast. This Piper cenocladum (Ant piper) protein is Small ribosomal subunit protein bS16c.